Consider the following 720-residue polypeptide: Zinc finger protein 408 (720 aa).

Residues 201-350 (VQQEVASPGE…GPAGSSPKQG (150 aa)) form a disordered region. Residues 275 to 285 (LQSNSATQQDP) show a composition bias toward polar residues. The span at 287–296 (GSGASFSSSA) shows a compositional bias: low complexity. T322 bears the Phosphothreonine mark. C2H2-type zinc fingers lie at residues 353–375 (YRCGECGKAFLQLCHLKKHAFVH), 381–403 (FLCTECGKSYSSEESFKAHMLGH), 409–431 (FPCPQCDKAYGTQRDLKEHQVVH), 437–459 (FACDQCGKAFARRPSLRLHRKTH), 468–490 (CPCPVCGRPLANQGSLRNHMRLH), 496–518 (FLCPHCGRAFRQRGNLRGHLRLH), 524–546 (YRCPHCADAFPQLPELRRHLISH), 551–573 (HLCPVCGKALRDPHTLRAHERLH), 579–601 (FPCPQCGRAYTLATKLRRHLKSH), and 607–629 (YRCPTCGMGYTLPQSLRRHQLSH).

Highest expression is observed in adult retina; abundantly expressed in the fetal eye. In the retina, it is detected in the outer nuclear layer, especially cone and rod photoreceptor cells, ganglion cell layer and both outer and inner plexiform layers (at protein level). Expressed in retinal blood vessels (at protein level).

Its subcellular location is the nucleus. Its function is as follows. May be involved in transcriptional regulation. This Homo sapiens (Human) protein is Zinc finger protein 408 (ZNF408).